A 482-amino-acid chain; its full sequence is uncharacterized protein (482 aa).

In terms of domain architecture, AB hydrolase-1 spans 231–459 (FEGNAGFYEI…FDACNHYLID (229 aa)).

This is an uncharacterized protein from Caenorhabditis elegans.